The sequence spans 371 residues: Glutamate 5-kinase (371 aa).

Residue Lys11 coordinates ATP. 3 residues coordinate substrate: Ser52, Asp139, and Asn151. ATP is bound by residues 171-172 (TD) and 213-219 (TGGMATK). The 79-residue stretch at 278-356 (EGSLTLDEGA…AEIPRILGYE (79 aa)) folds into the PUA domain.

The protein belongs to the glutamate 5-kinase family.

It is found in the cytoplasm. The enzyme catalyses L-glutamate + ATP = L-glutamyl 5-phosphate + ADP. The protein operates within amino-acid biosynthesis; L-proline biosynthesis; L-glutamate 5-semialdehyde from L-glutamate: step 1/2. Functionally, catalyzes the transfer of a phosphate group to glutamate to form L-glutamate 5-phosphate. The chain is Glutamate 5-kinase from Synechococcus sp. (strain JA-2-3B'a(2-13)) (Cyanobacteria bacterium Yellowstone B-Prime).